Here is a 120-residue protein sequence, read N- to C-terminus: Holo-[acyl-carrier-protein] synthase (120 aa).

Mg(2+) contacts are provided by Asp-8 and Glu-58.

Belongs to the P-Pant transferase superfamily. AcpS family. Mg(2+) serves as cofactor.

It localises to the cytoplasm. It carries out the reaction apo-[ACP] + CoA = holo-[ACP] + adenosine 3',5'-bisphosphate + H(+). Transfers the 4'-phosphopantetheine moiety from coenzyme A to a Ser of acyl-carrier-protein. In Streptococcus sanguinis (strain SK36), this protein is Holo-[acyl-carrier-protein] synthase.